A 444-amino-acid chain; its full sequence is Viral protein kinase (444 aa).

Positions 1–25 (MRWKRMERRPPLTPLRRSRTQSSGG) are disordered. Residues 90–98 (LGRGAFGII) and K108 contribute to the ATP site. Residue D201 is the Proton acceptor of the active site.

As to quaternary structure, interacts with protein K-bZIP/K8. Interacts with host beta-catenin/CTNNB1. In terms of processing, AUtophosphorylated.

The protein localises to the host nucleus. The catalysed reaction is L-seryl-[protein] + ATP = O-phospho-L-seryl-[protein] + ADP + H(+). It carries out the reaction L-threonyl-[protein] + ATP = O-phospho-L-threonyl-[protein] + ADP + H(+). Its function is as follows. Serine/threonine protein kinase that plays a role in viral gene expression, viral DNA replication and encapsidation, and nuclear egress of virions. Regulates host transcriptional activity through interactions with RNA helicase and c-Jun N-terminal kinase (JNK) and viral transcriptional activity through interactions with the viral protein K-bZIP/K8. Induces host chromosome condensation and phosphorylation of histone H3. Phosphorylates the DNA polymerase processivity factor hence modulating its processivity function. Inhibits the host Wnt signaling pathway via direct interactions with beta-catenin/CTNNB1 while the kinase activity of vPK is not required for this inhibitory activity. Also phosphorylates host SAMHD1 and thereby counteracts its antiviral effect by reducing its dNTP hydrolase activity. The polypeptide is Viral protein kinase (vPK) (Human herpesvirus 8 type P (isolate GK18) (HHV-8)).